The following is a 187-amino-acid chain: Protein TIFY 11b (187 aa).

The Tify domain occupies 68 to 103; it reads ATAPAAPLTIFYGGRMVVFEDFPADKAAEVMRMASS. The short motif at 121–145 is the Jas element; that stretch reads PIMRKASLQRFFAKRKDRLAATTPY. The Nuclear localization signal signature appears at 123–130; that stretch reads MRKASLQR. The interval 139–168 is disordered; it reads LAATTPYARPSPAETKASEPEEKKTPTSWL. Over residues 154 to 163 the composition is skewed to basic and acidic residues; that stretch reads KASEPEEKKT.

This sequence belongs to the TIFY/JAZ family. As to quaternary structure, interacts with COI1B in a coronatine-dependent manner. Coronatine is an analog of jasmonoyl isoleucine (JA-Ile). In terms of processing, ubiquitinated. Targeted for degradation by the SCF(COI1) E3 ubiquitin ligase-proteasome pathway during jasmonate signaling.

It localises to the nucleus. Repressor of jasmonate responses. In Oryza sativa subsp. japonica (Rice), this protein is Protein TIFY 11b.